Consider the following 338-residue polypeptide: RNA 3'-terminal phosphate cyclase (338 aa).

ATP contacts are provided by residues Gln103 and 283–287 (YLADQ). Residue His308 is the Tele-AMP-histidine intermediate of the active site.

This sequence belongs to the RNA 3'-terminal cyclase family. Type 1 subfamily.

Its subcellular location is the cytoplasm. The enzyme catalyses a 3'-end 3'-phospho-ribonucleotide-RNA + ATP = a 3'-end 2',3'-cyclophospho-ribonucleotide-RNA + AMP + diphosphate. Functionally, catalyzes the conversion of 3'-phosphate to a 2',3'-cyclic phosphodiester at the end of RNA. The mechanism of action of the enzyme occurs in 3 steps: (A) adenylation of the enzyme by ATP; (B) transfer of adenylate to an RNA-N3'P to produce RNA-N3'PP5'A; (C) and attack of the adjacent 2'-hydroxyl on the 3'-phosphorus in the diester linkage to produce the cyclic end product. The biological role of this enzyme is unknown but it is likely to function in some aspects of cellular RNA processing. The protein is RNA 3'-terminal phosphate cyclase of Escherichia coli O7:K1 (strain IAI39 / ExPEC).